A 39-amino-acid polypeptide reads, in one-letter code: Large ribosomal subunit protein bL36 (39 aa).

This sequence belongs to the bacterial ribosomal protein bL36 family.

The protein is Large ribosomal subunit protein bL36 of Leuconostoc mesenteroides subsp. mesenteroides (strain ATCC 8293 / DSM 20343 / BCRC 11652 / CCM 1803 / JCM 6124 / NCDO 523 / NBRC 100496 / NCIMB 8023 / NCTC 12954 / NRRL B-1118 / 37Y).